The following is a 312-amino-acid chain: Urease accessory protein 7 (312 aa).

The disordered stretch occupies residues 28–86 (QEATGTDSHHAHHHHTPSGASSAISHTHDNMPHDHGQFHDHGPGLWTPEEHGHTHEHLE). The segment at 36–87 (HHAHHHHTPSGASSAISHTHDNMPHDHGQFHDHGPGLWTPEEHGHTHEHLEH) is histine rich nickel-binding domain. The segment covering 53-86 (HTHDNMPHDHGQFHDHGPGLWTPEEHGHTHEHLE) has biased composition (basic and acidic residues). Residues 115 to 122 (GPVGSGKT) carry the GTP binding P-loop motif. Residues 147–154 (TREDQEFL) carry the Switch domain 1 motif. The switch domain 2 signature appears at 171–172 (GG).

This sequence belongs to the SIMIBI class G3E GTPase family. UreG subfamily. In terms of assembly, URE4, URE6 and URE7 may form a complex that acts as a GTP-hydrolysis-dependent molecular chaperone, activating the urease apoprotein URE1.

Its function is as follows. Urease accessory protein that binds 2 nickel atoms likely via its conserved histidine-rich domain and supplies nickel for the functional urease URE1. Has probably a dual function as a nickel chaperone and GTPase. Plays a role in host brain invasion. The polypeptide is Urease accessory protein 7 (Cryptococcus neoformans var. grubii serotype A (strain H99 / ATCC 208821 / CBS 10515 / FGSC 9487) (Filobasidiella neoformans var. grubii)).